Reading from the N-terminus, the 189-residue chain is GTP cyclohydrolase 1 (189 aa).

The Zn(2+) site is built by Cys-78, His-81, and Cys-150.

It belongs to the GTP cyclohydrolase I family. As to quaternary structure, homomer.

It carries out the reaction GTP + H2O = 7,8-dihydroneopterin 3'-triphosphate + formate + H(+). It participates in cofactor biosynthesis; 7,8-dihydroneopterin triphosphate biosynthesis; 7,8-dihydroneopterin triphosphate from GTP: step 1/1. The protein is GTP cyclohydrolase 1 of Lysinibacillus sphaericus (strain C3-41).